The primary structure comprises 161 residues: Tropomyosin-2 (161 aa).

Residues 1 to 161 (MEKIKEKLNS…DEIANSLENL (161 aa)) adopt a coiled-coil conformation. Positions 32-43 (LEQSNTEKENEI) are enriched in basic and acidic residues. A disordered region spans residues 32-97 (LEQSNTEKEN…NQDLEQQLED (66 aa)). Phosphoserine is present on Ser-55. The span at 62-83 (SQLSDTKQLAEDSNNLRSNNEN) shows a compositional bias: polar residues. Phosphoserine occurs at positions 116 and 157.

Homodimer.

The protein localises to the cytoplasm. It localises to the cytoskeleton. Its function is as follows. Involved in cell morphogenesis. Binds to F-actin and stabilizes the actin filaments. The protein is Tropomyosin-2 (TPM2) of Saccharomyces cerevisiae (strain ATCC 204508 / S288c) (Baker's yeast).